Here is a 188-residue protein sequence, read N- to C-terminus: MNGDDAFAKRPRDDAKASEKRSKAFDDIAKYFSKEEWEKMKFSEKISCVHMKRKYEAMTKLGFNVTLSLFMRNKRATDSQRNDSDNDRNRGNEVERPQMTFGRLQRIIPKIMPEKPAEEGSDSKGVPEASGPQNDGKKLCPPGKASSSEKIHERSGPKRGKHAWTHRLRERKQLVIYEEISDPEEDDK.

Disordered stretches follow at residues 1 to 22 (MNGD…EKRS) and 74 to 188 (KRAT…EDDK). One can recognise a KRAB-related domain in the interval 20–83 (KRSKAFDDIA…KRATDSQRND (64 aa)). Basic and acidic residues-rich tracts occupy residues 75–96 (RATD…EVER) and 112–122 (MPEKPAEEGSD). Residue serine 123 is modified to Phosphoserine. Basic and acidic residues predominate over residues 147 to 156 (SSEKIHERSG). Basic residues predominate over residues 157–170 (PKRGKHAWTHRLRE). Positions 179-188 (EISDPEEDDK) are enriched in acidic residues.

It belongs to the SSX family. As to expression, not detected in any normal tissues. Expressed in a melanoma cell line.

Could act as a modulator of transcription. The sequence is that of Putative protein SSX6 from Homo sapiens (Human).